A 95-amino-acid polypeptide reads, in one-letter code: MALVRSLFVSNKILGGSLAGMRKSTSAPKGFLAVYVGESQKKQRYLVLVSYLSQPLFQDLLSKSEEEFGFDHPMGGLTIPCPEDTFLTVTSRIQG.

The protein belongs to the ARG7 family. As to quaternary structure, interacts with PP2C-D1. In terms of tissue distribution, higher expression in thermo-responsive cultivars (e.g. cv. Alst-1, cv. Ang-0 and cv. Com-0) than in low thermo-responsive cultivars (e.g. cv. Dja-1, cv. El-0 and cv. Kon).

It is found in the cell membrane. Functions as a positive effector of cell expansion through modulation of auxin transport. Involved in thermo-responsiveness of plant architecture. Enhances plasma membrane H(+)-ATPase. The polypeptide is Auxin-responsive protein SAUR27 (Arabidopsis thaliana (Mouse-ear cress)).